Here is a 101-residue protein sequence, read N- to C-terminus: Large ribosomal subunit protein uL24 (101 aa).

It belongs to the universal ribosomal protein uL24 family. Part of the 50S ribosomal subunit.

In terms of biological role, one of two assembly initiator proteins, it binds directly to the 5'-end of the 23S rRNA, where it nucleates assembly of the 50S subunit. Its function is as follows. One of the proteins that surrounds the polypeptide exit tunnel on the outside of the subunit. The chain is Large ribosomal subunit protein uL24 from Cereibacter sphaeroides (strain ATCC 17029 / ATH 2.4.9) (Rhodobacter sphaeroides).